The sequence spans 2130 residues: MESGERLTSSSVSSTAAASSPVSSTPSVASAVSKSGLTTGAASLSSTINTGEWWRTADSHSRSGAAFFPPLLGPPLLGISPLFAPPAQNHDSTPFHPRTTGKNNRGSLEKGINGSLNGNSTTAASAISTSVLSTSIATSAGQVKVVTSGAGGRKYNQEQNKVQLLDTRADKIKDKKPRKKAVESSSNSDSDSGSSSDTSSEGISSSDSDDLEEDEEEEEDQSAEESEDDESDSENEAHHENKNKVLMHSGVKDMKTDGQKAHEKSQEKRTHQQIPLVSDSQTHSSFQSQQKQPQVLSQQLPFIFQSSQAKEESVNKHTSVIQSTGLVPNVKPLSLVHQTKKEAYLKIIVPPPDLLKAGNKNTSEESIPLISDVRSKREQYKQTFPAAQLKKQESSKNLKKVIASLSSSKPTSCSPAHQKLTSLENNHSNPFLTNALLGNHQPNGVIQSVIQEVPLALTTKQKSQTKINESVAIASSTPFSLPVNLSACGKKTTGNRTLVVPSTSPVLPGSGKDKPVSNNAVNAVKTQHCLPSAKLVVEQFRGVDSDAPSSKESDDSNDDDDDDEDEDEDDEDDDSDDSQSESDSNSESDTDGSEDEDDEDDKDQDESDTDTEGEKTPLKLKKTGSSIKSSSIGPVAHSTPLNLQVAKTPSSAPSALCPETQPAVFLGTTPSTLTPSSHCGISKRRRVTDERELRVPLEYGWQRETRIRNFGGRLQGEVAYFAPCGKKLRQYPEVVKGVQWCLLKEEEVVPCIRAMEGRRGRPPNPDRQHSREESRMRRRKGRPPNVGSTEFLDSTDAKLLRKLQAQEIARQAAQIKLLRKLQKQEQARAAKEAKKQQAIMAAEEKRKQKEQIKIMKQQEKIKRIQQIRMEKELRAQQILEAKKKKKEEAANAKLLEAEKRIKEKEMRRQQAVLLKHQELERHRLDMERERRRQHMMLMKAMEARKKAEEKERLKQEKRDEKRLNKERKLEQRRLELEMAKELKKPNEDMCLADQKALPELPRIPGLVLSGSTFSDCLMIVQFLRNFGKVLGFDVNTDVPSLSTLQEGLLNIGDSRGEVQDLLVKLVTAAVCDPGLVTGYKAKTILGEHLLNVGINRDNVSEILQIFMEAHCGQTELTESLKTKAFQAHTPAQKAAVLAFLVNELACSKSVVSEIDKNIDYMSNLRRDKWMVEGKLRNLRIIHAKKTGKRDATGGGEVGEEPHSLETPTPGRKRRRKGGDSDYDDDDDDDSDDQADEDDEDEEDKEDKKGKKAEVCEDEDDGDQTVSVEELEKQIEKLTKQQSQYRKKLFEASHCLRSMMFGQDRYRRRYWILPQCGGIFVEGMESGEGLEEIAKEKEKLKKVESIHIKEEVFEISEEKISCLNTTRCEQKEDLKEKDNTNLFLQKPGSFSKLSKLLEVAKMPPECDVMPQKPNGGAANGCTPSYQNTSQNSLCSLQPSVSQSSSEKSDSSNLFSPTASGTGKFYSSPLIPSDQLLKTLTEKNRQWFSLLPRVPCDDMSVTHVDTPATTSLTPQSHPPSKSPSPVPSPLLGSTSAQSPMGLSPFAMPPLQQMKPGLPVMGLQFCGWPTGVLTSNVQFSSPLPTLGSGLGLSEGNGNSFLTSSVPTSKSESPALQTEKVAFATCTAVEVAKPVDHPNPKPIPEEMQYGWWRITDPEDLKSLHKVLHLRGIREKALQKQIQKHMDYITLACIKNKDVAIIDINENEDNQVTRDVVENWSVEEQAMEVDLAILQQVEDLERRVASASLQVKGWLCPEPASEREDLVYHEHKSIIRLHKKHDGDSAGGGEGSTSSLERKNDNPLDIAVTRLADLERNIERRYLKSPLSTTIQIKLDNVGTVTVPAPAPSISGDGDGTEEDIAPGLRVWRKALSEARSAAQVALCIQQLQKSIAWEKSIMKVYCQICRKGDNEELLLLCDGCDKGCHTYCHRPKITTIPDGDWFCPACIAKASGQTLKLKKLQIKGKKSNEQKRGRKLPGDTEDEDSATTSTSLKRGKTEPKKRKMDESVSVSQGKQENFTAIKKPKRDDSKDLAICSMILSELETHEDAWPFLLPVNLKLVPGYKKVIKKPMDFSTIRDKLTSGQYPNVEAFSLDVRLVFDNCETFNEDDSDIGRAGHNMRKYFEKKWTEIFKLS.

7 disordered regions span residues 1–42 (MESG…TGAA), 82–118 (LFAP…SLNG), 151–293 (GGRK…QKQP), 491–518 (KTTG…PVSN), 543–633 (VDSD…SSIG), 756–790 (EGRR…GSTE), and 944–966 (RKKA…LNKE). The span at 8-33 (TSSSVSSTAAASSPVSSTPSVASAVS) shows a compositional bias: low complexity. Over residues 183 to 206 (ESSSNSDSDSGSSSDTSSEGISSS) the composition is skewed to low complexity. Over residues 207–234 (DSDDLEEDEEEEEDQSAEESEDDESDSE) the composition is skewed to acidic residues. A compositionally biased stretch (basic and acidic residues) spans 250-270 (GVKDMKTDGQKAHEKSQEKRT). A compositionally biased stretch (polar residues) spans 272 to 283 (QQIPLVSDSQTH). Low complexity predominate over residues 284 to 293 (SSFQSQQKQP). The segment covering 492-505 (TTGNRTLVVPSTSP) has biased composition (polar residues). Residues 543 to 554 (VDSDAPSSKESD) show a composition bias toward basic and acidic residues. The segment covering 555–611 (DSNDDDDDDEDEDEDDEDDDSDDSQSESDSNSESDTDGSEDEDDEDDKDQDESDTDT) has biased composition (acidic residues). Residues 623 to 633 (TGSSIKSSSIG) show a composition bias toward low complexity. Residues 687–762 (VTDERELRVP…RAMEGRRGRP (76 aa)) form the MBD domain. Positions 756 to 775 (EGRRGRPPNPDRQHSREESR) are enriched in basic and acidic residues. Residues 797 to 984 (AKLLRKLQAQ…ELEMAKELKK (188 aa)) adopt a coiled-coil conformation. The DDT domain occupies 1010–1075 (GSTFSDCLMI…VTAAVCDPGL (66 aa)). Disordered stretches follow at residues 1186-1265 (TGKR…DQTV), 1431-1454 (SLCS…NLFS), 1499-1545 (VTHV…PFAM), and 1773-1795 (HKKH…ERKN). Positions 1220 to 1244 (SDYDDDDDDDSDDQADEDDEDEEDK) are enriched in acidic residues. The segment covering 1245–1254 (EDKKGKKAEV) has biased composition (basic and acidic residues). Residues 1514–1526 (SHPPSKSPSPVPS) are compositionally biased toward pro residues. A PHD-type zinc finger spans residues 1895 to 1945 (KVYCQICRKGDNEELLLLCDGCDKGCHTYCHRPKITTIPDGDWFCPACIAK). The segment at 1957–2019 (QIKGKKSNEQ…KQENFTAIKK (63 aa)) is disordered. Residues 1991–2002 (GKTEPKKRKMDE) show a composition bias toward basic and acidic residues. Residues 2004–2014 (VSVSQGKQENF) show a composition bias toward polar residues. The 105-residue stretch at 2022-2126 (RDDSKDLAIC…KYFEKKWTEI (105 aa)) folds into the Bromo domain.

This sequence belongs to the WAL family.

It is found in the nucleus. In terms of biological role, regulatory subunit of the ATP-dependent BRF-1 and BRF-5 ISWI chromatin remodeling complexes, which form ordered nucleosome arrays on chromatin and facilitate access to DNA during DNA-templated processes such as DNA replication, transcription, and repair. Both complexes regulate the spacing of nucleosomes along the chromatin and have the ability to slide mononucleosomes to the center of a DNA template. The BRF-1 ISWI chromatin remodeling complex has a lower ATP hydrolysis rate than the BRF-5 ISWI chromatin remodeling complex. Chromatin reader protein. Represses the expression of mitochondrial function-related genes, perhaps by transcriptional regulation. This Gallus gallus (Chicken) protein is Bromodomain adjacent to zinc finger domain protein 2B (BAZ2B).